The following is a 441-amino-acid chain: Trigger factor (441 aa).

In terms of domain architecture, PPIase FKBP-type spans 161 to 246; sequence GDMVTVDFQG…VKDVKERILA (86 aa).

It belongs to the FKBP-type PPIase family. Tig subfamily.

It is found in the cytoplasm. The catalysed reaction is [protein]-peptidylproline (omega=180) = [protein]-peptidylproline (omega=0). Involved in protein export. Acts as a chaperone by maintaining the newly synthesized protein in an open conformation. Functions as a peptidyl-prolyl cis-trans isomerase. In Desulfotalea psychrophila (strain LSv54 / DSM 12343), this protein is Trigger factor.